The sequence spans 862 residues: Leucine--tRNA ligase (862 aa).

The short motif at 42–52 is the 'HIGH' region element; sequence PYPSGKIHIGH. Positions 614 to 618 match the 'KMSKS' region motif; it reads KMSKS. K617 provides a ligand contact to ATP.

Belongs to the class-I aminoacyl-tRNA synthetase family.

The protein resides in the cytoplasm. The catalysed reaction is tRNA(Leu) + L-leucine + ATP = L-leucyl-tRNA(Leu) + AMP + diphosphate. This is Leucine--tRNA ligase from Syntrophus aciditrophicus (strain SB).